The chain runs to 538 residues: Spindle pole body protein CSA6 (538 aa).

Disordered regions lie at residues 1–31 (MEDS…TSDL) and 57–129 (QNIS…KYQD). Basic and acidic residues-rich tracts occupy residues 18–30 (PEIK…KTSD) and 57–68 (QNISDSEHDLTP). 2 stretches are compositionally biased toward polar residues: residues 86 to 96 (KFSSSIPQKPT) and 104 to 122 (TSPT…SGPN). The stretch at 144-237 (KQEQNLKLEN…RNERDELVKD (94 aa)) forms a coiled coil. Over residues 304–323 (KKISEPSAAVEKDTTSEDKT) the composition is skewed to basic and acidic residues. 2 disordered regions span residues 304 to 338 (KKIS…TPRM) and 355 to 458 (SSNN…STKY). Composition is skewed to polar residues over residues 355–392 (SSNN…SAAY) and 407–425 (TNFY…QSSQ). Residues 426-444 (SDERPETFELPHVAKDHWL) are compositionally biased toward basic and acidic residues. A compositionally biased stretch (polar residues) spans 446 to 457 (RPTSERSTQSTK).

It localises to the cytoplasm. Its subcellular location is the cytoskeleton. It is found in the microtubule organizing center. The protein resides in the spindle pole body. Its function is as follows. Plays a role in mitotic spindle pole body organization, possibly at the point of spindle pole body separation. Required for mitotic exit. The sequence is that of Spindle pole body protein CSA6 from Candida albicans (strain SC5314 / ATCC MYA-2876) (Yeast).